The primary structure comprises 555 residues: Potassium-transporting ATPase potassium-binding subunit (555 aa).

A run of 10 helical transmembrane segments spans residues 2 to 22, 60 to 80, 130 to 150, 173 to 193, 246 to 266, 278 to 298, 374 to 394, 412 to 432, 483 to 503, and 525 to 545; these read IWVAVIITMLLFILVAKPTGI, QYALSLVLLNGFMIVVVYFIF, IGITFLMFAAPATTLALVMAF, VFLPIAFIAALVFVALGVPQT, MSNILQMMLMMLLPTALPFTY, ILFVSLFMVFLLGFITITTSE, AGFVNIIMYAIIAVFISGLMV, LIAVTILFHPLLILGFSALAL, LVMFLGRYFSLITMLAVAASL, and GIFIGTIVIVGALTFFPMLVL.

Belongs to the KdpA family. The system is composed of three essential subunits: KdpA, KdpB and KdpC.

The protein resides in the cell membrane. In terms of biological role, part of the high-affinity ATP-driven potassium transport (or Kdp) system, which catalyzes the hydrolysis of ATP coupled with the electrogenic transport of potassium into the cytoplasm. This subunit binds the extracellular potassium ions and delivers the ions to the membrane domain of KdpB through an intramembrane tunnel. The polypeptide is Potassium-transporting ATPase potassium-binding subunit (Bacillus cereus (strain G9842)).